The following is a 108-amino-acid chain: MPKLGILKSKSMFCVIYRSSKRDQTYLYVEKKDDFSRVPEELMKGFGQPQLAMILPLDGRKKLVNADIEKVKLALTEQGYYLQLPPPPEDLLKQHLSVMGQKTDDTNK.

The YcgL domain occupies 12 to 96; it reads MFCVIYRSSK…PPEDLLKQHL (85 aa).

The sequence is that of Protein YcgL from Shigella sonnei (strain Ss046).